The following is a 1576-amino-acid chain: DNA-directed RNA polymerase subunit beta' (1576 aa).

C64, C66, C79, and C82 together coordinate Zn(2+). The Mg(2+) site is built by D590, D592, and D594. The Zn(2+) site is built by C928, C1002, C1009, and C1012.

Belongs to the RNA polymerase beta' chain family. The RNAP catalytic core consists of 2 alpha, 1 beta, 1 beta' and 1 omega subunit. When a sigma factor is associated with the core the holoenzyme is formed, which can initiate transcription. The cofactor is Mg(2+). Zn(2+) is required as a cofactor.

It catalyses the reaction RNA(n) + a ribonucleoside 5'-triphosphate = RNA(n+1) + diphosphate. In terms of biological role, DNA-dependent RNA polymerase catalyzes the transcription of DNA into RNA using the four ribonucleoside triphosphates as substrates. The protein is DNA-directed RNA polymerase subunit beta' of Aquifex pyrophilus.